Consider the following 358-residue polypeptide: Heavy metal-associated isoprenylated plant protein 37 (358 aa).

Residues 12–75 form the HMA domain; that stretch reads IQTFSLRVNI…KLVKAGKHAE (64 aa). Cys-23 and Cys-26 together coordinate a metal cation. Disordered stretches follow at residues 100-194 and 332-358; these read QKGQ…QNTQ and QQQS…CNIM. The segment covering 128-141 has biased composition (acidic residues); sequence AEEDGDGSEEEDGD. Residues 148–181 show a composition bias toward low complexity; that stretch reads ANQQQQQNVVNAKKNSGGAAMNNGNNGVNAASKK. 2 stretches are compositionally biased toward polar residues: residues 184 to 194 and 339 to 358; these read QKQSNHNQNTQ and HATN…CNIM. A Cysteine methyl ester modification is found at Cys-355. Cys-355 is lipidated: S-farnesyl cysteine. Residues 356–358 constitute a propeptide, removed in mature form; that stretch reads NIM.

Belongs to the HIPP family.

In terms of biological role, heavy-metal-binding protein. In Arabidopsis thaliana (Mouse-ear cress), this protein is Heavy metal-associated isoprenylated plant protein 37.